Reading from the N-terminus, the 104-residue chain is Ribonuclease P protein component 4 (104 aa).

Zn(2+)-binding residues include Cys-63, Cys-66, Cys-89, and Cys-92.

The protein belongs to the eukaryotic/archaeal RNase P protein component 4 family. In terms of assembly, consists of a catalytic RNA component and at least 4-5 protein subunits. Requires Zn(2+) as cofactor.

It is found in the cytoplasm. It carries out the reaction Endonucleolytic cleavage of RNA, removing 5'-extranucleotides from tRNA precursor.. Its function is as follows. Part of ribonuclease P, a protein complex that generates mature tRNA molecules by cleaving their 5'-ends. In Methanoregula boonei (strain DSM 21154 / JCM 14090 / 6A8), this protein is Ribonuclease P protein component 4.